A 78-amino-acid polypeptide reads, in one-letter code: Large ribosomal subunit protein bL31 (78 aa).

4 residues coordinate Zn(2+): cysteine 16, cysteine 18, cysteine 38, and cysteine 41.

It belongs to the bacterial ribosomal protein bL31 family. Type A subfamily. In terms of assembly, part of the 50S ribosomal subunit. Zn(2+) is required as a cofactor.

Functionally, binds the 23S rRNA. The chain is Large ribosomal subunit protein bL31 from Frankia casuarinae (strain DSM 45818 / CECT 9043 / HFP020203 / CcI3).